A 563-amino-acid chain; its full sequence is 5-aminolevulinate synthase, mitochondrial (563 aa).

A mitochondrion-targeting transit peptide spans 1-18; that stretch reads MESLVRQSKKLCPYIGRT. Positions 137, 251, and 270 each coordinate substrate. 3 residues coordinate pyridoxal 5'-phosphate: serine 303, histidine 331, and threonine 373. Residue lysine 376 is part of the active site. Lysine 376 bears the N6-(pyridoxal phosphate)lysine mark. 2 residues coordinate pyridoxal 5'-phosphate: threonine 405 and threonine 406. Residue threonine 491 coordinates substrate.

It belongs to the class-II pyridoxal-phosphate-dependent aminotransferase family. As to quaternary structure, homodimer. Requires pyridoxal 5'-phosphate as cofactor.

The protein resides in the mitochondrion matrix. The enzyme catalyses succinyl-CoA + glycine + H(+) = 5-aminolevulinate + CO2 + CoA. Its pathway is porphyrin-containing compound metabolism; protoporphyrin-IX biosynthesis; 5-aminolevulinate from glycine: step 1/1. Its function is as follows. Catalyzes the synthesis of 5-aminolevulinate (ALA) from succinyl-CoA and glycine, the first and rate-limiting step in heme biosynthesis. The sequence is that of 5-aminolevulinate synthase, mitochondrial (HEM1) from Yarrowia lipolytica (strain CLIB 122 / E 150) (Yeast).